The sequence spans 717 residues: ATP-dependent zinc metalloprotease FtsH (717 aa).

Residues 1–7 lie on the Cytoplasmic side of the membrane; the sequence is MFKDKKM. A helical membrane pass occupies residues 8–28; it reads LKYIVIYSIIAFGILLTFNMV. The Extracellular portion of the chain corresponds to 29–109; the sequence is KDEMLYEKVD…VEFNVTKPEN (81 aa). Residues 110-130 traverse the membrane as a helical segment; that stretch reads YQLLGLLMSWVFPLILIFFVG. At 131–717 the chain is on the cytoplasmic side; it reads RMMFSKMNNK…SSTNNKVDGE (587 aa). Residue 206–213 coordinates ATP; sequence GPPGTGKT. H427 is a Zn(2+) binding site. E428 is an active-site residue. 2 residues coordinate Zn(2+): H431 and D504. The tract at residues 670–717 is disordered; sequence KLARANNEANNDALDSSKENEEVKSNVNDGATEEKKDDSSTNNKVDGE. 2 stretches are compositionally biased toward basic and acidic residues: residues 684-693 and 701-717; these read DSSKENEEVK and TEEK…VDGE.

The protein in the central section; belongs to the AAA ATPase family. This sequence in the C-terminal section; belongs to the peptidase M41 family. Homohexamer. The cofactor is Zn(2+).

The protein localises to the cell membrane. In terms of biological role, acts as a processive, ATP-dependent zinc metallopeptidase for both cytoplasmic and membrane proteins. Plays a role in the quality control of integral membrane proteins. This is ATP-dependent zinc metalloprotease FtsH from Clostridium perfringens (strain ATCC 13124 / DSM 756 / JCM 1290 / NCIMB 6125 / NCTC 8237 / Type A).